A 548-amino-acid polypeptide reads, in one-letter code: Folylpolyglutamate synthase (548 aa).

ATP is bound at residue 130 to 133; it reads GKGS. Mg(2+)-binding residues include serine 157, glutamate 234, and histidine 262. Residues arginine 382 and aspartate 396 each coordinate ATP.

It belongs to the folylpolyglutamate synthase family. Requires a monovalent cation as cofactor.

The protein resides in the mitochondrion inner membrane. The protein localises to the mitochondrion matrix. It is found in the cytoplasm. It catalyses the reaction (6S)-5,6,7,8-tetrahydrofolyl-(gamma-L-Glu)(n) + L-glutamate + ATP = (6S)-5,6,7,8-tetrahydrofolyl-(gamma-L-Glu)(n+1) + ADP + phosphate + H(+). The protein operates within cofactor biosynthesis; tetrahydrofolylpolyglutamate biosynthesis. In terms of biological role, catalyzes conversion of folates to polyglutamate derivatives allowing concentration of folate compounds in the cell and the intracellular retention of these cofactors, which are important substrates for most of the folate-dependent enzymes that are involved in one-carbon transfer reactions involved in purine, pyrimidine and amino acid synthesis. Required for methionine synthesis and maintenance of intact mitochondrial DNA. Involved in telomere maintenance. In Saccharomyces cerevisiae (strain FostersO) (Baker's yeast), this protein is Folylpolyglutamate synthase.